The sequence spans 575 residues: Manganese transporter SMF1 (575 aa).

The Extracellular segment spans residues M1–R70. S24 is subject to Phosphoserine. Glycyl lysine isopeptide (Lys-Gly) (interchain with G-Cter in ubiquitin) cross-links involve residues K33 and K34. A helical membrane pass occupies residues D71–I91. The Cytoplasmic portion of the chain corresponds to D92–F108. Residues S109–I129 form a helical membrane-spanning segment. Residues K130 to Y156 are Extracellular-facing. A helical membrane pass occupies residues F157–A177. At L178–N179 the chain is on the cytoplasmic side. The chain crosses the membrane as a helical span at residues I180–I200. Over M201–E218 the chain is Extracellular. Residues C219 to I239 traverse the membrane as a helical segment. Residues P240–T266 are Cytoplasmic-facing. The helical transmembrane segment at A267 to V287 threads the bilayer. The Extracellular portion of the chain corresponds to Q288 to E344. Residues L345–G365 form a helical membrane-spanning segment. At S366 to T396 the chain is on the cytoplasmic side. Residues I397–G417 form a helical membrane-spanning segment. The Extracellular portion of the chain corresponds to Q418–N463. The helical transmembrane segment at A464 to T484 threads the bilayer. Residues C485–W543 lie on the Cytoplasmic side of the membrane. The tract at residues H498–V517 is disordered. The chain crosses the membrane as a helical span at residues I544 to I564. The Extracellular portion of the chain corresponds to V565–S575.

The protein belongs to the NRAMP family.

Its subcellular location is the cell membrane. The catalysed reaction is Mn(2+)(in) = Mn(2+)(out). Functionally, high-affinity manganese transporter involved in manganese uptake from the extracellular environment. Also contributes to cellular accumulation of other divalent metal ions such as cadmium, cobalt, copper, iron and nickel. This is Manganese transporter SMF1 (SMF1) from Saccharomyces cerevisiae (strain ATCC 204508 / S288c) (Baker's yeast).